Reading from the N-terminus, the 363-residue chain is 3,4-dihydroxy-2-butanone 4-phosphate synthase (363 aa).

Residues 1–202 are DHBP synthase; that stretch reads MSHISPIPEI…ITDLIEYRSR (202 aa). Residues 28–29, aspartate 33, 141–145, and glutamate 165 each bind D-ribulose 5-phosphate; these read RE and RAGHT. Glutamate 29 is a binding site for Mg(2+). Histidine 144 is a binding site for Mg(2+). Positions 205-363 are GTP cyclohydrolase II-like; sequence SLLEDMGNAP…EVVGFEEAEK (159 aa).

It in the N-terminal section; belongs to the DHBP synthase family. In the C-terminal section; belongs to the GTP cyclohydrolase II family. Mg(2+) serves as cofactor. It depends on Mn(2+) as a cofactor.

It carries out the reaction D-ribulose 5-phosphate = (2S)-2-hydroxy-3-oxobutyl phosphate + formate + H(+). It participates in cofactor biosynthesis; riboflavin biosynthesis; 2-hydroxy-3-oxobutyl phosphate from D-ribulose 5-phosphate: step 1/1. In terms of biological role, catalyzes the conversion of D-ribulose 5-phosphate to formate and 3,4-dihydroxy-2-butanone 4-phosphate. In Neisseria meningitidis serogroup A / serotype 4A (strain DSM 15465 / Z2491), this protein is 3,4-dihydroxy-2-butanone 4-phosphate synthase (ribB).